A 167-amino-acid polypeptide reads, in one-letter code: Aphrodisin (167 aa).

An N-terminal signal peptide occupies residues 1–16 (MVKILLLALVFSLAHA). A Pyrrolidone carboxylic acid modification is found at Q17. 2 disulfide bridges follow: C54–C58 and C73–C165. N-linked (GlcNAc...) asparagine glycosylation is found at N57 and N85.

Belongs to the calycin superfamily. Lipocalin family. Expressed in the vagina, uterus, and Bartholin's glands of female hamsters. Secreted in vaginal discharge.

It is found in the secreted. Its function is as follows. Acts as an aphrodisiac pheromone, reliably eliciting copulatory behavior from male hamster. This Cricetus cricetus (Black-bellied hamster) protein is Aphrodisin.